Consider the following 182-residue polypeptide: Malignant T-cell-amplified sequence 1 homolog (182 aa).

The PUA domain maps to 93-172 (VTMQQVDKGA…IGIETYHFLN (80 aa)).

Belongs to the MCTS1 family. As to quaternary structure, interacts with DENR.

It is found in the cytoplasm. Regulates translation as part of a complex with DENR. Specifically required for translational re-initiation in mRNAs containing upstream open reading frames (uORFs). Not required for standard translational initiation. Regulates expression of a subset of gene products including mbc, InR and EcR. The chain is Malignant T-cell-amplified sequence 1 homolog from Drosophila melanogaster (Fruit fly).